Reading from the N-terminus, the 574-residue chain is Urease subunit alpha (574 aa).

In terms of domain architecture, Urease spans 131–574 (GAIDSHIHFI…LPMAQRYLLL (444 aa)). Positions 136, 138, and 219 each coordinate Ni(2+). N6-carboxylysine is present on K219. H221 is a binding site for substrate. Ni(2+)-binding residues include H248 and H274. H322 (proton donor) is an active-site residue. Residue D362 participates in Ni(2+) binding. The interval 384-403 (KVQRGPLPEDAANPRGSRND) is disordered.

It belongs to the metallo-dependent hydrolases superfamily. Urease alpha subunit family. Heterotrimer of UreA (gamma), UreB (beta) and UreC (alpha) subunits. Three heterotrimers associate to form the active enzyme. The cofactor is Ni cation. In terms of processing, carboxylation allows a single lysine to coordinate two nickel ions.

It is found in the cytoplasm. The catalysed reaction is urea + 2 H2O + H(+) = hydrogencarbonate + 2 NH4(+). The protein operates within nitrogen metabolism; urea degradation; CO(2) and NH(3) from urea (urease route): step 1/1. The protein is Urease subunit alpha of Prochlorococcus marinus (strain MIT 9313).